A 316-amino-acid chain; its full sequence is Lipoyl synthase (316 aa).

Residues 1–15 (MKARNESMSKGEYKT) show a composition bias toward basic and acidic residues. The segment at 1-33 (MKARNESMSKGEYKTKSLKNRPDPTQPKLKKPS) is disordered. [4Fe-4S] cluster-binding residues include Cys64, Cys69, Cys75, Cys90, Cys94, Cys97, and Ser304. The Radical SAM core domain occupies 76–293 (FGHGTATFMI…EQAGMEMGFT (218 aa)).

Belongs to the radical SAM superfamily. Lipoyl synthase family. It depends on [4Fe-4S] cluster as a cofactor.

The protein localises to the cytoplasm. The catalysed reaction is [[Fe-S] cluster scaffold protein carrying a second [4Fe-4S](2+) cluster] + N(6)-octanoyl-L-lysyl-[protein] + 2 oxidized [2Fe-2S]-[ferredoxin] + 2 S-adenosyl-L-methionine + 4 H(+) = [[Fe-S] cluster scaffold protein] + N(6)-[(R)-dihydrolipoyl]-L-lysyl-[protein] + 4 Fe(3+) + 2 hydrogen sulfide + 2 5'-deoxyadenosine + 2 L-methionine + 2 reduced [2Fe-2S]-[ferredoxin]. The protein operates within protein modification; protein lipoylation via endogenous pathway; protein N(6)-(lipoyl)lysine from octanoyl-[acyl-carrier-protein]: step 2/2. Catalyzes the radical-mediated insertion of two sulfur atoms into the C-6 and C-8 positions of the octanoyl moiety bound to the lipoyl domains of lipoate-dependent enzymes, thereby converting the octanoylated domains into lipoylated derivatives. This Hydrogenovibrio crunogenus (strain DSM 25203 / XCL-2) (Thiomicrospira crunogena) protein is Lipoyl synthase.